We begin with the raw amino-acid sequence, 4749 residues long: MMMCAATASPAAASSGPGGDGFFAAATISSSPAPGALFMPVPDGSVAAAGLGLGLPTTDSRGHYQLLLSGRALADRYRRIYTTALSDRDQAGSSTGHPASRNKKILNKKKLKRKQKSKSKVKTRSKSENVENTVIIPDIKLHSNPSAFNIYCNVRHCVLEWQKKETSLAAASKNSVQSGESDSDEEEESREPPIKLPKIIEVGLCEVFELIKETRFSHPSLCLRSLQALLNVLQGQQPEGLQSEPPEVLESLFQLLLEITVRSTGMNDSTGQSLTALSCACLFSLVASWGETGRTLQAISAILTNNGSHACQTIQVPTILNSLQRSVQAVLVGKIQVQDWFSNGIKKAALMHKWPLKEVSVDEDDQCLLQNDGFFLYLLCKDGLYKIGSGYSGTVRGHIYNSTSRIRNRKEKKSWLGYAQGYLLYRDLNNHSMTAIRISPETLEQDGTVLLPDCHTEGQNILFTDGEYINQIAASRDDGFVVRIFATSTEPVLQQELQLKLARKCLHACGISLFDLEKDLHIISTGFDEESAILGAGREFALMKTANGKIYYTGKYQSLGIKQGGPSAGKWVELPITKSPKIVHFSVGHDGSHALLVAEDGSVFFTGSASKGEDGESTKSRRQSKPYKPKKIIKMEGKIVVYTACNNGSSSVISKDGELYMFGKDAIYSDSSSLVSDLKGHFVTQVAMGKAHTCVLMKNGEVWTFGVNNKGQCGRDTGAMNQGGKGFGVENMATAMDEDLEEELDEKDEKSMMCPPGMHKWKLEQCMVCTVCGDCTGYGASCVSSGRPDRVPGGICGCGSGESGCAVCGCCKACARELDGQEARQRGILDAVKEMIPLDLLLAVPVPGVNIEEHLQLRQEEKRQRVIRRHRLEDGRGPLVFAGPIFMNHREQALARLRSHPAQLKHKRDKHKDGSGDRGEKDASKITTYPPGSVRFDCELRAVQVSCGFHHSVVLMENGDVYTFGYGQHGQLGHGDVNSRGCPTLVQALPGPSTQVTAGSNHTAVLLMDGQVFTFGSFSKGQLGRPILDIPYWNAKPAPMPNIGSKYGRKATWIGASGDQTFLRIDEALINSHVLATSEIFASKHIIGLVPASISEPPPFKCLLINKVDGSCKTFNDSEQEDLQGFGVCLDPVYDVLWRFRPSTRELWCYNAVVADARLPSATDMQSRCSILSPELALPTGSRALTTRSHAALHILGCLDTLAAMQDLKMGIASTEEETQAVMKVYSKEDYSVVNRFESHGGGWGYSAHSVEAIRFSADTDILLGGLGLFGGRGEYTAKIKLFELGPDGGDHETDGDLLAETDVLAYDCAAREKYAMMFDEPVLLQAGWWYVAWARVSGPSSDCGSHGQASITTDDGVIFQFKSSKKSNNGTDVNAGQIPQLLYRLPTSDGSTSKGKQQTSEPVHILKRSFARTVSVECFESLLSILHWSWTTLVLGVEELRGLKGFQFTATLLDLERLRFVGTCCLRLLRVYTCEIYPVSATGKAVVEETSKLAECIGKTRTLLRKILSEGVDHCMVKLDNDPQGYLSQPLRLLEAVLQECHNTFTACFHSFYPTPALQWACLCDLLNCLDQEANFKTSSSRLLAAVMSALCHTSVKLTSLFPIAYDGEVLLRSIVKQVSTENDSTLVHRFPLLVGHMEKLSQSEENISGMTSFREVLEKMLVIVVLPVRNSLRRESELFSSHLVSNTCGLLASIVSELTASALGSEVDGLNSLHSVKASANRFTKTSQGRSWNTGNGSPDAICFAVDKPGIVVVGFAVYGGGGIHEYELEVLVDDSEHAGDSTHSHRWTSLELVKGTYTTDDSPSDIAEIRLDKVVPLKENVKYAVRLRNYGSRTANGDGGMTTVQCPDGVTFTFSTCSLSSNGTNQTRGQIPQILYYRSEFDGDLQSQLLSKANEEDKNCSRALSVVSTVVRAAKDLLHRALAVDADDIPELLSSSSLFSMLLPLIIAYIGPVAAAIPKVAVEVFGLVQQLLPSVAILNQKYAPPAFNPNQSTDSTTGNQPEQGLSACTTSNHYAVIESEHPYKPACVMHYKVTFPECVRWMTIEFDPQCGTAQSEDVIRLLIPVRTIQNSGYGAKLTSVHENLNSWVELKKYSGSSGWPTMVLVLPGNEALFSLETASDYVKDDKASFYGFKCFAIGYEFSPGPDEGVIQLEKELANLGGVCAAALMKKDLALPVGNELEEDLEILEEAALQVCKTHSGILGKGLALSHSPTILEALEGNLPLQIQSNEQSFLDDFIACVPGSSGGRLARWLQPDSYADPQKTSLILNKDDIRCGWPTTITVQTKDQYGDVVHVPNMKVEVKAVPVSQKKTSLQQDQGKKCQRIPGSPSAAASSADMTFGGLASPKLDVSYEPMIVKEARYIAITMMKVYENYSFEELRFASPTPKRPSENMLIRVNNDGTYCANWTPGAIGLYTVHVTIDGIEIDAGLEVKVKDPPKGMIPPGTQLVKPKADPQPNKIRKFVAKDSAGLRIRSHPSLQSEQIGIVRVNGTITFIDEIHNDDGVWLRLNEETIKKYVPNMNGYTEAWCLSFNQHLGKSLLVPVDNIFNASQGVRDLDVFSWTSKAFFPQEPKTNTDDFFKDMNSCGPQEATMQERDHPFLRGGPGMYKVVKTGPSGHNIRSCPNLRGIPIGMLVLGNKVKAVGEVTNSEGAWVQLDKNSMVEFCESDEGEAWSLARDRGGNQYLRHEDEQVLLDQNSQPPPPSPFSVQAFNKGASCSAQGFDYGLGNNKGDQLSAILNSIQSRPNLPAPSIFDQAAKPPSSLVHSPFVFGQPLSFQQRQLQSDRGTISTSSRPVSTSGKSELPSKHSRSVKPDGHVSRTPADQKKPRGTEGLSASESLMLKSDAAKLRSDSHSRSLSPNHNTLQTLKSDGRTSSGFRAESPGPGSRSSSPKPKPLPTPRSSPSGASSPRSSSPQDKNLPQKSTAPAKTKLDPPRERSKSDSYTLDPDTLRKKKMPLTEPLRGRSTSPKPKPVPKDPKDSPGSENRAPSPHVVQENLHSEVVEVCTSSTLKTNGVTDSTCDDSGDLKSVDEGSNKVHFSIGKAPLKDEQEMRASPKISRKCANRHTRPKKEKSNFLFKGDGTKSLEPAKQAMSPSVAECARAVFASFLWHEGIVHDAMACSSFLKFNPDLSKEHAPIRSSLNSQPPTEEKEIKLKNRHSLEISSALNMFNIAPHGPDISKMGSINKNKVLSMLKEPPLHEKCEDGKSEATFEMSMHHTMKSKSPLPLTLQHLVAFWEDISLATIKAASQNMIFPSPGSCAVLKKKECEKENKKTKKEKKKKEKTEIRPRGNLFGEMAQLAVGGPEKDTICELCGESHPYPVTYHMRQAHPGCGRYAGGQGYNSIGHFCGGWAGNCGDGGMGGSTWYLVCDRCREKYLREKQAAAREKVKQSRRKPMQVKTPRALPTMEAHQVIKANALFLLSLSSAAEPSILCYHPAKPFQSQLPIVKEGVSEDLPVKMPCLYLQTLARHHHENFVGYQDDNLFQDEMRYLRSTSVPAPYISVTPDASPNVFEEPESNMKSMPPSLETSPITDTDLAKRTVFQRSYSVVASEYDKQHSILPARVKAIPRRRVNSGDTVGSSLLRHPSPELSRLISAHSSLSKGERNFQWPVLAFVIQHHDLEGLEIAMKQALRKSACRVFAMEAFNWLLCNVIQTTSLHDILWHFVAALTPSPVEAEEDEDEDNKSNKENAEQEKDTRVCEHPLSDIVIAGEAAHPLPHTFHRLLQTISDLMMSLPSGSSLQQMALRCWSLKFKQSDHQFLHQSNVFHHINNILSKSDDGDSEESFSISVQSGFEAMSQELCIVMCLKDLTSIVDIKTSSRPAMIGSLTDGSTETFWESGDEDKNKTKNITINCVKGINARYVSVHVDNSRDLGNKVTSMTFLTGKAVEELCRIKQVDLDSRHIGWVTSELPGGDNQIIKIELKGPENTLRVRQVKVLGWKDGESTKIAGQISASVAQQRSCEAETLRVFRLITSQVFGKLISGDAEPTPEQEEKALLSSPEGEEKVYNATSDADLKEHMVGIIFSRSKLTNLQKQVCAHIVQAIRMEATRVREEWEHAISSKENANSQPSDEDASSDAYCFELLSMVLALSGSNVGRQYLAQQLTLLQDLFSLLHTASPRVQRQVTSLLRRVLPEVTPNRLASIIGVKSLPPADISDIIHSTEKGDWNKLGILDMFLGCIAKALTVQLKAKGTTITGTAGTTVGKGVTTVTLPMIFNSSYLRRGESHWWMKGSTPTQISEIIIRLIKDMAAGHLSEAWSRVTKNAIAETIIALTKMEEEFRSPVRCIATTRLWLALASLCVLDQDHVDRLSSGRWMGKDGQQKQMPMCDNHDDGETAAIILCNICGNLCTDCDRFLHLHRRTKTHQRQVFKEEEEAIKVDLHEGCGRTKLFWLMALADSKTMKAMVEFREHTGKPTTSSSEACRFCGSRSGTELSAVGSVCSDADCQEYAKIACSKTHPCGHPCGGVRNEEHCLPCLHGCDKSATTLKQDADDMCMICFTEALSAAPAIQLDCSHVFHLQCCRRVLENRWLGPRITFGFISCPICKNKINHIVLKDLLDPIKELYEDVRRKALMRLEYEGLHKSEAITTPGVRFYNDAAGYAMNRYAYYVCYKCRKAYFGGEARCDAEAGQGDDYDPRELICGACSDVSRAQMCPKHGTDFLEYKCRYCCSVAVFFCFGTTHFCNACHDDFQRMTSIPKEELPHCPAGPKGKQLEGTECPLHVVHPPTGEEFALGCGVCRNAHTF.

Disordered regions lie at residues 87-127, 170-192, and 609-628; these read DRDQ…RSKS, AASK…SREP, and ASKG…KPYK. The segment covering 100–124 has biased composition (basic residues); the sequence is SRNKKILNKKKLKRKQKSKSKVKTR. A phosphoserine mark is found at serine 127, serine 178, serine 181, and serine 183. 5 RCC1 repeats span residues 600-655, 699-755, 907-957, 958-1009, and 1011-1066; these read DGSV…VISK, NGEV…MMCP, KRDK…VLME, NGDV…LLMD, and QVFT…LRID. The segment covering 899–910 has biased composition (basic residues); the sequence is SHPAQLKHKRDK. Residues 899–928 are disordered; the sequence is SHPAQLKHKRDKHKDGSGDRGEKDASKITT. Positions 911 to 924 are enriched in basic and acidic residues; it reads HKDGSGDRGEKDAS. The segment at 1235–1386 is PHR domain 1; sequence NRFESHGGGW…GQIPQLLYRL (152 aa). A Phosphoserine modification is found at serine 1621. The PHR domain 2 stretch occupies residues 1723 to 1881; that stretch reads NRFTKTSQGR…GQIPQILYYR (159 aa). A disulfide bridge connects residues cysteine 1745 and cysteine 1860. An RAE1 binding region spans residues 2018 to 2544; that stretch reads AVIESEHPYK…FNQHLGKSLL (527 aa). 2 disordered regions span residues 2313–2336 and 2780–3084; these read KKTS…SAAA and QQRQ…KGDG. The Filamin repeat unit spans residues 2331-2438; sequence SPSAAASSAD…IDAGLEVKVK (108 aa). Over residues 2780–2803 the composition is skewed to polar residues; sequence QQRQLQSDRGTISTSSRPVSTSGK. Residues 2814 to 2832 are compositionally biased toward basic and acidic residues; that stretch reads VKPDGHVSRTPADQKKPRG. A Phosphoserine modification is found at serine 2841. Basic and acidic residues predominate over residues 2847–2857; sequence DAAKLRSDSHS. Over residues 2858–2879 the composition is skewed to polar residues; the sequence is RSLSPNHNTLQTLKSDGRTSSG. Residues serine 2859 and serine 2861 each carry the phosphoserine modification. Low complexity-rich tracts occupy residues 2884–2894 and 2904–2917; these read SPGPGSRSSSP and SSPS…SSSP. Phosphoserine occurs at positions 2905 and 2911. Residues 2918–2929 are compositionally biased toward polar residues; that stretch reads QDKNLPQKSTAP. Over residues 2932 to 2943 the composition is skewed to basic and acidic residues; the sequence is TKLDPPRERSKS. Serine 2941, serine 2943, and serine 2992 each carry phosphoserine. Polar residues predominate over residues 3008–3021; that stretch reads CTSSTLKTNGVTDS. 2 stretches are compositionally biased toward basic and acidic residues: residues 3027–3037 and 3047–3056; these read GDLKSVDEGSN and PLKDEQEMRA. Serine 3057 carries the post-translational modification Phosphoserine. The segment covering 3060-3073 has biased composition (basic residues); the sequence is ISRKCANRHTRPKK. A phosphoserine mark is found at serine 3162, serine 3550, and serine 3577. The disordered stretch occupies residues 3677 to 3700; sequence VEAEEDEDEDNKSNKENAEQEKDT. Residues 3687-3700 are compositionally biased toward basic and acidic residues; the sequence is NKSNKENAEQEKDT. One can recognise a DOC domain in the interval 3789–3967; sequence FSISVQSGFE…SVAQQRSCEA (179 aa). The tract at residues 3986-4007 is disordered; it reads SGDAEPTPEQEEKALLSSPEGE. Threonine 3992 bears the Phosphothreonine mark. A phosphoserine mark is found at serine 4002 and serine 4003. Zn(2+) is bound by residues cysteine 4499, cysteine 4502, cysteine 4517, histidine 4519, histidine 4522, cysteine 4525, cysteine 4546, cysteine 4549, cysteine 4615, and cysteine 4618. An RING-type; atypical zinc finger spans residues 4499–4550; it reads CMICFTEALSAAPAIQLDCSHVFHLQCCRRVLENRWLGPRITFGFISCPICK. The segment at 4610-4747 is tandem cysteine domain; that stretch reads YAYYVCYKCR…LGCGVCRNAH (138 aa). Cysteine 4629 is a catalytic residue. Zn(2+)-binding residues include cysteine 4646, cysteine 4649, cysteine 4658, histidine 4661, cysteine 4670, cysteine 4673, and cysteine 4674. The active site involves cysteine 4681. Cysteine 4688, cysteine 4691, cysteine 4709, cysteine 4723, histidine 4729, cysteine 4740, and cysteine 4743 together coordinate Zn(2+).

The protein belongs to the RING-Cys relay (RCR) family. Interacts with MYC. Interacts with TSC2 (tuberin) when TSC2 is in complex with TSC1 (hamartin). Interacts with FBXO45. Interacts with RAE1. Interacts with CPNE1 (via VWFA domain) and CPNE4 (via VWFA domain). Interacts with (sumoylated) RANGAP1; interaction with sumoylated RANGAP1 inhibits E3 ubiquitin-protein ligase activity and promotes MYCBP2 translocation to the nucleus. Interacts with RAN. Interacts with ATP13A2; the interaction inhibits the ubiquitination of TSC2 by MYCBP2. Interacts with USP11. In terms of processing, autoubiquitinated. Expression is mostly restricted to the nervous system, including expression in motor and sensory axons. During postnatal development, expression is particularly strong in the cerebellum, hippocampus and retina. Lower levels of expression are observed throughout the cerebral cortex.

Its subcellular location is the nucleus. The protein resides in the cell projection. The protein localises to the axon. It localises to the cytoplasm. It is found in the cytoskeleton. It catalyses the reaction [E2 ubiquitin-conjugating enzyme]-S-ubiquitinyl-L-cysteine + [acceptor protein]-L-threonine = [E2 ubiquitin-conjugating enzyme]-L-cysteine + [acceptor protein]-3-O-ubiquitinyl-L-threonine.. It functions in the pathway protein modification; protein ubiquitination. Its function is as follows. Atypical E3 ubiquitin-protein ligase which specifically mediates ubiquitination of threonine and serine residues on target proteins, instead of ubiquitinating lysine residues. Shows esterification activity towards both threonine and serine, with a preference for threonine, and acts via two essential catalytic cysteine residues that relay ubiquitin to its substrate via thioester intermediates. Interacts with the E2 enzymes UBE2D1, UBE2D3, UBE2E1 and UBE2L3. Plays a key role in neural development, probably by mediating ubiquitination of threonine residues on target proteins. Involved in different processes such as regulation of neurite outgrowth, synaptic growth, synaptogenesis and axon degeneration. Required for the formation of major central nervous system axon tracts. Required for proper axon growth by regulating axon navigation and axon branching: acts by regulating the subcellular location and stability of MAP3K12/DLK. Required for proper localization of retinogeniculate projections but not for eye-specific segregation. Regulates axon guidance in the olfactory system. Involved in Wallerian axon degeneration, an evolutionarily conserved process that drives the loss of damaged axons: acts by promoting destabilization of NMNAT2, probably via ubiquitination of NMNAT2. Catalyzes ubiquitination of threonine and/or serine residues on NMNAT2, consequences of threonine and/or serine ubiquitination are however unknown. Regulates the internalization of TRPV1 in peripheral sensory neurons. May mediate ubiquitination and subsequent proteasomal degradation of TSC2/tuberin. Independently of the E3 ubiquitin-protein ligase activity, also acts as a guanosine exchange factor (GEF) for RAN in neurons of dorsal root ganglia. May function as a facilitator or regulator of transcriptional activation by MYC. Acts in concert with HUWE1 to regulate the circadian clock gene expression by promoting the lithium-induced ubiquination and degradation of NR1D1. This is E3 ubiquitin-protein ligase MYCBP2 from Mus musculus (Mouse).